Consider the following 138-residue polypeptide: Large ribosomal subunit protein bL17 (138 aa).

The protein belongs to the bacterial ribosomal protein bL17 family. In terms of assembly, part of the 50S ribosomal subunit. Contacts protein L32.

In Dinoroseobacter shibae (strain DSM 16493 / NCIMB 14021 / DFL 12), this protein is Large ribosomal subunit protein bL17.